Reading from the N-terminus, the 336-residue chain is Fructose-1,6-bisphosphatase class 1 (336 aa).

Residues Glu90, Asp112, Leu114, and Asp115 each coordinate Mg(2+). Substrate-binding positions include 115-118 (DGSS), Asn211, and Lys277. Mg(2+) is bound at residue Glu283.

The protein belongs to the FBPase class 1 family. As to quaternary structure, homotetramer. Mg(2+) is required as a cofactor.

The protein resides in the cytoplasm. The enzyme catalyses beta-D-fructose 1,6-bisphosphate + H2O = beta-D-fructose 6-phosphate + phosphate. It participates in carbohydrate biosynthesis; gluconeogenesis. This is Fructose-1,6-bisphosphatase class 1 from Pseudomonas fluorescens (strain Pf0-1).